A 149-amino-acid polypeptide reads, in one-letter code: Large ribosomal subunit protein bL9 (149 aa).

Belongs to the bacterial ribosomal protein bL9 family.

Functionally, binds to the 23S rRNA. This chain is Large ribosomal subunit protein bL9, found in Campylobacter curvus (strain 525.92).